Consider the following 195-residue polypeptide: Imidazoleglycerol-phosphate dehydratase (195 aa).

It belongs to the imidazoleglycerol-phosphate dehydratase family.

It is found in the cytoplasm. It carries out the reaction D-erythro-1-(imidazol-4-yl)glycerol 3-phosphate = 3-(imidazol-4-yl)-2-oxopropyl phosphate + H2O. It functions in the pathway amino-acid biosynthesis; L-histidine biosynthesis; L-histidine from 5-phospho-alpha-D-ribose 1-diphosphate: step 6/9. The sequence is that of Imidazoleglycerol-phosphate dehydratase from Acetivibrio thermocellus (strain ATCC 27405 / DSM 1237 / JCM 9322 / NBRC 103400 / NCIMB 10682 / NRRL B-4536 / VPI 7372) (Clostridium thermocellum).